A 92-amino-acid polypeptide reads, in one-letter code: Small ribosomal subunit protein bS20 (92 aa).

The interval 1–24 is disordered; the sequence is MANSAQARKRARQAAKANSHNSAL.

It belongs to the bacterial ribosomal protein bS20 family.

Binds directly to 16S ribosomal RNA. The chain is Small ribosomal subunit protein bS20 from Paraburkholderia xenovorans (strain LB400).